The following is a 241-amino-acid chain: Phosphoribosylaminoimidazole-succinocarboxamide synthase (241 aa).

It belongs to the SAICAR synthetase family.

The enzyme catalyses 5-amino-1-(5-phospho-D-ribosyl)imidazole-4-carboxylate + L-aspartate + ATP = (2S)-2-[5-amino-1-(5-phospho-beta-D-ribosyl)imidazole-4-carboxamido]succinate + ADP + phosphate + 2 H(+). It functions in the pathway purine metabolism; IMP biosynthesis via de novo pathway; 5-amino-1-(5-phospho-D-ribosyl)imidazole-4-carboxamide from 5-amino-1-(5-phospho-D-ribosyl)imidazole-4-carboxylate: step 1/2. This chain is Phosphoribosylaminoimidazole-succinocarboxamide synthase, found in Oenococcus oeni (strain ATCC BAA-331 / PSU-1).